The sequence spans 260 residues: Cytochrome c oxidase subunit 3 (260 aa).

Residues 1-15 (MTHQTHAYHMVNPSP) are Mitochondrial matrix-facing. A helical membrane pass occupies residues 16-34 (WPLTGALSALLMTSGLAMW). Residues 35-40 (FHFNST) lie on the Mitochondrial intermembrane side of the membrane. Residues 41–66 (ALLMIGLTTNMLTMYQWWRDIIREST) traverse the membrane as a helical segment. Topologically, residues 67–72 (FQGHHT) are mitochondrial matrix. The chain crosses the membrane as a helical span at residues 73–105 (PAVQKGLRYGMILFIISEVLFFTGFFWAFYHSS). Over 106 to 128 (LAPTPELGGCWPPTGIHPLNPLE) the chain is Mitochondrial intermembrane. Residues 129-152 (VPLLNTSVLLASGVSITWAHHSLM) traverse the membrane as a helical segment. Over 153–155 (EGD) the chain is Mitochondrial matrix. The helical transmembrane segment at 156 to 183 (RNHMLQALFITITLGVYFTLLQASEYYE) threads the bilayer. Residues 184-190 (APFTISD) lie on the Mitochondrial intermembrane side of the membrane. A helical membrane pass occupies residues 191–223 (GVYGSTFFVATGFHGLHVIIGSTFLIVCFFRQL). At 224–232 (KFHFTSNHH) the chain is on the mitochondrial matrix side. Residues 233–256 (FGFEAAAWYWHFVDVVWLFLYVSI) form a helical membrane-spanning segment. The Mitochondrial intermembrane segment spans residues 257–260 (YWWG).

This sequence belongs to the cytochrome c oxidase subunit 3 family. Component of the cytochrome c oxidase (complex IV, CIV), a multisubunit enzyme composed of 14 subunits. The complex is composed of a catalytic core of 3 subunits MT-CO1, MT-CO2 and MT-CO3, encoded in the mitochondrial DNA, and 11 supernumerary subunits COX4I, COX5A, COX5B, COX6A, COX6B, COX6C, COX7A, COX7B, COX7C, COX8 and NDUFA4, which are encoded in the nuclear genome. The complex exists as a monomer or a dimer and forms supercomplexes (SCs) in the inner mitochondrial membrane with NADH-ubiquinone oxidoreductase (complex I, CI) and ubiquinol-cytochrome c oxidoreductase (cytochrome b-c1 complex, complex III, CIII), resulting in different assemblies (supercomplex SCI(1)III(2)IV(1) and megacomplex MCI(2)III(2)IV(2)).

The protein resides in the mitochondrion inner membrane. The enzyme catalyses 4 Fe(II)-[cytochrome c] + O2 + 8 H(+)(in) = 4 Fe(III)-[cytochrome c] + 2 H2O + 4 H(+)(out). Component of the cytochrome c oxidase, the last enzyme in the mitochondrial electron transport chain which drives oxidative phosphorylation. The respiratory chain contains 3 multisubunit complexes succinate dehydrogenase (complex II, CII), ubiquinol-cytochrome c oxidoreductase (cytochrome b-c1 complex, complex III, CIII) and cytochrome c oxidase (complex IV, CIV), that cooperate to transfer electrons derived from NADH and succinate to molecular oxygen, creating an electrochemical gradient over the inner membrane that drives transmembrane transport and the ATP synthase. Cytochrome c oxidase is the component of the respiratory chain that catalyzes the reduction of oxygen to water. Electrons originating from reduced cytochrome c in the intermembrane space (IMS) are transferred via the dinuclear copper A center (CU(A)) of subunit 2 and heme A of subunit 1 to the active site in subunit 1, a binuclear center (BNC) formed by heme A3 and copper B (CU(B)). The BNC reduces molecular oxygen to 2 water molecules using 4 electrons from cytochrome c in the IMS and 4 protons from the mitochondrial matrix. This is Cytochrome c oxidase subunit 3 (MT-CO3) from Bos mutus grunniens (Wild yak).